Here is a 341-residue protein sequence, read N- to C-terminus: Glycerol-3-phosphate dehydrogenase [NAD(P)+] (341 aa).

Residues serine 17, tryptophan 18, arginine 37, and lysine 112 each coordinate NADPH. 2 residues coordinate sn-glycerol 3-phosphate: lysine 112 and glycine 140. Alanine 144 lines the NADPH pocket. Lysine 195, aspartate 248, serine 258, arginine 259, and asparagine 260 together coordinate sn-glycerol 3-phosphate. Lysine 195 functions as the Proton acceptor in the catalytic mechanism. Arginine 259 is an NADPH binding site. Positions 283 and 285 each coordinate NADPH.

It belongs to the NAD-dependent glycerol-3-phosphate dehydrogenase family.

Its subcellular location is the cytoplasm. The enzyme catalyses sn-glycerol 3-phosphate + NAD(+) = dihydroxyacetone phosphate + NADH + H(+). It catalyses the reaction sn-glycerol 3-phosphate + NADP(+) = dihydroxyacetone phosphate + NADPH + H(+). Its pathway is membrane lipid metabolism; glycerophospholipid metabolism. Its function is as follows. Catalyzes the reduction of the glycolytic intermediate dihydroxyacetone phosphate (DHAP) to sn-glycerol 3-phosphate (G3P), the key precursor for phospholipid synthesis. The sequence is that of Glycerol-3-phosphate dehydrogenase [NAD(P)+] from Mycobacterium avium (strain 104).